The following is a 309-amino-acid chain: Porphobilinogen deaminase (309 aa).

The residue at position 244 (cysteine 244) is an S-(dipyrrolylmethanemethyl)cysteine.

The protein belongs to the HMBS family. In terms of assembly, monomer. Dipyrromethane is required as a cofactor.

The enzyme catalyses 4 porphobilinogen + H2O = hydroxymethylbilane + 4 NH4(+). It participates in porphyrin-containing compound metabolism; protoporphyrin-IX biosynthesis; coproporphyrinogen-III from 5-aminolevulinate: step 2/4. Tetrapolymerization of the monopyrrole PBG into the hydroxymethylbilane pre-uroporphyrinogen in several discrete steps. This Rhizobium meliloti (strain 1021) (Ensifer meliloti) protein is Porphobilinogen deaminase.